A 944-amino-acid chain; its full sequence is Breast cancer type 2 susceptibility protein homolog (944 aa).

Basic and acidic residues-rich tracts occupy residues 325–348 and 415–431; these read KKVK…ESKI and NSIK…ETPN. Disordered regions lie at residues 325–354 and 415–440; these read KKVK…ASCD and NSIK…SSHQ. BRCA2 repeat units follow at residues 543 to 577, 644 to 678, and 719 to 753; these read AEPE…EFQS, NESQ…QSRA, and SETE…EFQA. 2 disordered regions span residues 823 to 854 and 876 to 944; these read LCSQ…LDQA and SSTE…RSRY. Polar residues-rich tracts occupy residues 838–852 and 876–885; these read IHSS…SPLD and SSTETSTSCA. The segment covering 904 to 921 has biased composition (basic and acidic residues); the sequence is ADRDLNRSKDCAKNRQDA. Over residues 932 to 944 the composition is skewed to basic residues; the sequence is KKSRRLGLSRSRY.

Interacts with Rad9 and spn-A/Rad51.

It is found in the nucleus. Its function is as follows. Involved in and required for double-strand break repair by meiotic and mitotic homologous recombination. During meiosis, has a dual role in the repair of meiotic double-stranded breaks and the efficient activation of the meiotic recombination checkpoint. The sequence is that of Breast cancer type 2 susceptibility protein homolog from Drosophila simulans (Fruit fly).